The sequence spans 317 residues: tRNA dimethylallyltransferase (317 aa).

14–21 (GPTASGKS) is an ATP binding site. A substrate-binding site is contributed by 16 to 21 (TASGKS). Interaction with substrate tRNA stretches follow at residues 39–42 (DSVL) and 163–167 (QRIQR).

It belongs to the IPP transferase family. In terms of assembly, monomer. The cofactor is Mg(2+).

It carries out the reaction adenosine(37) in tRNA + dimethylallyl diphosphate = N(6)-dimethylallyladenosine(37) in tRNA + diphosphate. Functionally, catalyzes the transfer of a dimethylallyl group onto the adenine at position 37 in tRNAs that read codons beginning with uridine, leading to the formation of N6-(dimethylallyl)adenosine (i(6)A). This chain is tRNA dimethylallyltransferase, found in Xylella fastidiosa (strain 9a5c).